The primary structure comprises 963 residues: MDAPKAGYAFEYLIETLNDSSHKKFFDVSKLGTKYDVLPYSIRVLLEAAVRNCDGFLMKKEDVMNILDWKTKQSNVEVPFFPARVLLQDFTGIPAMVDFAAMREAVKTLGGDPEKVHPACPTDLTVDHSLQIDFSKCAIQNAPNPGGGDLQKAGKLSPLKVQPKKLPCRGQTTCRGSCDSGELGRNSGTFSSQIENTPILCPFHLQPVPEPETVLKNQEVEFGRNRERLQFFKWSSRVFKNVAVIPPGTGMAHQINLEYLSRVVFEEKDLLFPDSVVGTDSHITMVNGLGILGWGVGGIETEAVMLGLPVSLTLPEVVGCELTGSSNPFVTSIDVVLGITKHLRQVGVAGKFVEFFGSGVSQLSIVDRTTIANMCPEYGAILSFFPVDNVTLKHLEHTGFSKAKLESMETYLKAVKLFRNDQNSSGEPEYSQVIQINLNSIVPSVSGPKRPQDRVAVTDMKSDFQACLNEKVGFKGFQIAAEKQKDIVSIHYEGSEYKLSHGSVVIAAVISCTNNCNPSVMLAAGLLAKKAVEAGLRVKPYIRTSLSPGSGMVTHYLSSSGVLPYLSKLGFEIVGYGCSICVGNTAPLSDAVLNAVKQGDLVTCGILSGNKNFEGRLCDCVRANYLASPPLVVAYAIAGTVNIDFQTEPLGTDPTGKNIYLHDIWPSREEVHRVEEEHVILSMFKALKDKIEMGNKRWNSLEAPDSVLFPWDLKSTYIRCPSFFDKLTKEPIALQAIENAHVLLYLGDSVTTDHISPAGSIARNSAAAKYLTNRGLTPREFNSYGARRGNDAVMTRGTFANIKLFNKFIGKPAPKTIHFPSGQTLDVFEAAELYQKEGIPLIILAGKKYGSGNSRDWAAKGPYLLGVKAVLAESYEKIHKDHLIGIGIAPLQFLPGENADSLGLSGRETFSLTFPEELSPGITLNIQTSTGKVFSVIASFEDDVEITLYKHGGLLNFVARKFS.

The [4Fe-4S] cluster site is built by Cys512, Cys578, and Cys581.

The protein belongs to the aconitase/IPM isomerase family. Interacts with RBCK1 isoform 1 and isoform 2 only in iron-rich conditions. Interacts (when associated with the 4Fe-4S) with FBXL5. Interacts with CIAO1 and CIAO2A. The cofactor is [4Fe-4S] cluster. In terms of processing, ubiquitinated and degraded by the proteasome in presence of high level of iron and oxygen. Ubiquitinated by a SCF complex containing FBXL5. Upon iron and oxygen depletion FBXL5 is degraded, preventing ubiquitination and allowing its RNA-binding activity.

The protein resides in the cytoplasm. Functionally, RNA-binding protein that binds to iron-responsive elements (IRES), which are stem-loop structures found in the 5'-UTR of ferritin, and delta aminolevulinic acid synthase mRNAs, and in the 3'-UTR of transferrin receptor mRNA. Binding to the IRE element in ferritin results in the repression of its mRNA translation. Binding of the protein to the transferrin receptor mRNA inhibits the degradation of this otherwise rapidly degraded mRNA. This chain is Iron-responsive element-binding protein 2 (IREB2), found in Homo sapiens (Human).